The chain runs to 805 residues: MKYDFTSIEKKWQTRWQAEATFATGTDHSKPKYYVLDMFPYPSGSGLHVGHLEGYTASDIIARYKRSSGYNVLHPMGWDAFGLPAEQFAIKTGTHPRITTEANVKNFKGTLQAMGFSYDWEREINTTDSGYFKWTQWIFLQLYDRGLAYMSEVDVNWCEELKTVLANEEVDEKLADGYTVVRRPLRQWVLKITAYAERLLADLEELDWPENVKQMQRNWIGRSEGVEIDFELRCHRTTLKAYTTRPDTLFGATYLVIAPEHPMAEKLATAPQLLVVKEYITKAKLKSDLERTGLQKEKSGVFTGSYAINPATGQPLPIWISDFVLISYGTGAIMSVPAHDSRDWAFAKQYNLPIIEVIKSPHDVQEAVFEEKNSTCVNSANDEISLNGLDFATAFERMATWLESKKVGKRKVNYKLRDWIFSRQRYWGEPIPIKHYEDGTIRPETNLPLELPAVEAYHPTSTGESPLANITEWLIGNDEHGAFRRETNTMPQWAGSCWYYLRFIDPHNHAQVVDGNNERYWMNVDLYIGGAEHAVLHLLYSRFWHKVLYDLGVVSTKEPFQKLFNQGMILGEDNEKMSKSRGNVIPADHVLQRYGADAVRLYEMFLGPLEQVKPWNTNGIEGISRFLGKVWRFVYPEHSEAATQPSNEPLPDELLRRMHKTIKKVGDDTSSLKFNTAIAEMMVFVNELTKTGCNNREAIETLLKLLAPYAPHMTEELWEALGHTNSISHEPFPTFNPALVEENMAIIAVQVNGKLRGTFTVPAKSPKEMLLEEARKVESVAKFLEGKTIVKEIVVPDKLVNFAVK.

Positions 40-51 (PYPSGSGLHVGH) match the 'HIGH' region motif. A 'KMSKS' region motif is present at residues 576–580 (KMSKS). Lys579 lines the ATP pocket.

It belongs to the class-I aminoacyl-tRNA synthetase family.

Its subcellular location is the cytoplasm. It catalyses the reaction tRNA(Leu) + L-leucine + ATP = L-leucyl-tRNA(Leu) + AMP + diphosphate. This is Leucine--tRNA ligase from Chlorobium chlorochromatii (strain CaD3).